Consider the following 2789-residue polypeptide: Multiple epidermal growth factor-like domains protein 8 (2789 aa).

An N-terminal signal peptide occupies residues 1-27; it reads MALGGALALALALALAVLGPLSLRVLA. Residues 28 to 2591 are Extracellular-facing; sequence GDCKGQRQVL…FFRQDQAHID (2564 aa). Intrachain disulfides connect Cys-30–Cys-57, Cys-142–Cys-152, Cys-146–Cys-158, Cys-174–Cys-184, Cys-178–Cys-191, and Cys-193–Cys-202. The CUB 1 domain occupies 30–140; sequence CKGQRQVLRE…LGFNASFRFS (111 aa). Asn-50 carries an N-linked (GlcNAc...) asparagine glycan. EGF-like domains are found at residues 138–168 and 170–203; these read RFSL…GGPD and GLQE…RACD. 6 Kelch repeats span residues 241–287, 290–338, 346–399, 402–453, 459–511, and 525–575; these read LLAV…AVAW, LLVL…AGHA, WLYV…FHAP, TLLV…FHTA, YMVV…APPS, and VLLV…SRDP. PSI domains lie at 561–613, 847–899, and 900–947; these read YCSM…SDCQ, ACTS…ALCP, and LCEE…EECP. A glycan (N-linked (GlcNAc...) asparagine) is linked at Asn-1048. Positions 1074-1115 constitute an EGF-like 3; calcium-binding domain; sequence DVDECRLGLARCHPRATCLNTPLSYECHCQRGYQGDGITHCN. 16 disulfide bridges follow: Cys-1078–Cys-1091, Cys-1085–Cys-1100, Cys-1102–Cys-1114, Cys-1163–Cys-1171, Cys-1165–Cys-1179, Cys-1182–Cys-1191, Cys-1194–Cys-1208, Cys-1211–Cys-1224, Cys-1213–Cys-1231, Cys-1233–Cys-1242, Cys-1245–Cys-1259, Cys-1263–Cys-1302, Cys-1336–Cys-1367, Cys-1407–Cys-1421, Cys-1415–Cys-1433, and Cys-1435–Cys-1444. Laminin EGF-like domains are found at residues 1163-1210 and 1211-1261; these read CGCS…GCRP and CQCN…SCFR. Asn-1226 is a glycosylation site (N-linked (GlcNAc...) asparagine). One can recognise a CUB 2 domain in the interval 1263–1405; it reads CGGRALLTNV…WGFNASVGSA (143 aa). A glycan (N-linked (GlcNAc...) asparagine) is linked at Asn-1271. Residue Thr-1353 is modified to Phosphothreonine. Residues 1403-1445 form the EGF-like 4 domain; that stretch reads GSARCGSGGPGSCPVPQECVPQDGAAGAGLCRCPQGWAGPHCR. Kelch repeat units follow at residues 1522–1570, 1580–1629, 1632–1679, 1685–1735, 1740–1787, and 1796–1841; these read TLWM…SFHA, AMYL…TARR, SLLL…SAVY, SLYV…HASA, TMVV…ESVA, and RLYI…WCHG. 4 consecutive PSI domains span residues 1820–1860, 1868–1923, 2004–2062, and 2064–2121; these read PCRL…PPCS, ECRR…NDCR, PCHL…ESCS, and GCAQ…LSCP. Asn-2010 carries an N-linked (GlcNAc...) asparagine glycan. An EGF-like 5 domain is found at 2122-2160; that stretch reads PEDECANGHHDCNETQNCHDQPHGYECSCKTGYTMDNVT. Cystine bridges form between Cys-2126–Cys-2139 and Cys-2133–Cys-2148. Asn-2158 and Asn-2173 each carry an N-linked (GlcNAc...) asparagine glycan. Cystine bridges form between Cys-2197/Cys-2205, Cys-2199/Cys-2214, Cys-2217/Cys-2226, Cys-2229/Cys-2243, Cys-2324/Cys-2333, Cys-2326/Cys-2341, Cys-2343/Cys-2368, and Cys-2371/Cys-2385. 2 Laminin EGF-like domains span residues 2197-2245 and 2324-2387; these read CRCN…TCRP and CQCN…QCYR. The interval 2468-2508 is disordered; it reads VHIQPPPPPPPPPPPADGVPRVAADLGGLGTGSGSGSPVEP. Residues 2471 to 2484 are compositionally biased toward pro residues; sequence QPPPPPPPPPPPAD. Residues 2592–2612 form a helical membrane-spanning segment; that stretch reads LFVFFSVFFSCFFLFLSLCVL. Residues 2613–2789 are Cytoplasmic-facing; it reads LWKAKQALDQ…SQDNLTSMSL (177 aa). The segment covering 2762 to 2776 has biased composition (gly residues); it reads GGAGGSGHGGGGGRK. Residues 2762 to 2789 are disordered; the sequence is GGAGGSGHGGGGGRKGLLSQDNLTSMSL. A compositionally biased stretch (polar residues) spans 2780-2789; sequence SQDNLTSMSL.

In terms of tissue distribution, highest expression in brain, testis and kidney.

The protein localises to the membrane. Its function is as follows. Acts as a negative regulator of hedgehog signaling. The sequence is that of Multiple epidermal growth factor-like domains protein 8 (Megf8) from Mus musculus (Mouse).